Here is a 411-residue protein sequence, read N- to C-terminus: LL-diaminopimelate aminotransferase (411 aa).

Tyr15 and Gly42 together coordinate substrate. Residues Tyr72, 108–109, Tyr132, Asn187, Tyr218, and 246–248 each bind pyridoxal 5'-phosphate; these read SK and SFS. Substrate contacts are provided by Lys109, Tyr132, and Asn187. Residue Lys249 is modified to N6-(pyridoxal phosphate)lysine. Pyridoxal 5'-phosphate contacts are provided by Arg257 and Asn292. Substrate-binding residues include Asn292 and Arg388.

Belongs to the class-I pyridoxal-phosphate-dependent aminotransferase family. LL-diaminopimelate aminotransferase subfamily. As to quaternary structure, homodimer. Pyridoxal 5'-phosphate serves as cofactor.

The catalysed reaction is (2S,6S)-2,6-diaminopimelate + 2-oxoglutarate = (S)-2,3,4,5-tetrahydrodipicolinate + L-glutamate + H2O + H(+). The protein operates within amino-acid biosynthesis; L-lysine biosynthesis via DAP pathway; LL-2,6-diaminopimelate from (S)-tetrahydrodipicolinate (aminotransferase route): step 1/1. In terms of biological role, involved in the synthesis of meso-diaminopimelate (m-DAP or DL-DAP), required for both lysine and peptidoglycan biosynthesis. Catalyzes the direct conversion of tetrahydrodipicolinate to LL-diaminopimelate. This chain is LL-diaminopimelate aminotransferase, found in Trichodesmium erythraeum (strain IMS101).